A 320-amino-acid chain; its full sequence is ATP-dependent 6-phosphofructokinase (320 aa).

Gly-12 serves as a coordination point for ATP. Residues 22 to 26 and 55 to 60 each bind ADP; these read RGVVR and RYSVSD. Residues 73–74 and 103–106 each bind ATP; these read RF and GDGS. Position 104 (Asp-104) interacts with Mg(2+). 126-128 lines the substrate pocket; sequence TID. Asp-128 functions as the Proton acceptor in the catalytic mechanism. Arg-155 provides a ligand contact to ADP. Substrate contacts are provided by residues Arg-163 and 170–172; that span reads MGR. Residues 186 to 188, Lys-212, and 214 to 216 each bind ADP; these read GCE and KKH. Substrate-binding positions include Glu-223, Arg-244, and 250 to 253; that span reads HIQR.

The protein belongs to the phosphofructokinase type A (PFKA) family. ATP-dependent PFK group I subfamily. Prokaryotic clade 'B1' sub-subfamily. As to quaternary structure, homotetramer. It depends on Mg(2+) as a cofactor.

Its subcellular location is the cytoplasm. It catalyses the reaction beta-D-fructose 6-phosphate + ATP = beta-D-fructose 1,6-bisphosphate + ADP + H(+). It functions in the pathway carbohydrate degradation; glycolysis; D-glyceraldehyde 3-phosphate and glycerone phosphate from D-glucose: step 3/4. With respect to regulation, allosterically activated by ADP and other diphosphonucleosides, and allosterically inhibited by phosphoenolpyruvate. In terms of biological role, catalyzes the phosphorylation of D-fructose 6-phosphate to fructose 1,6-bisphosphate by ATP, the first committing step of glycolysis. The chain is ATP-dependent 6-phosphofructokinase from Salmonella gallinarum (strain 287/91 / NCTC 13346).